The primary structure comprises 254 residues: 3-deoxy-manno-octulosonate cytidylyltransferase (254 aa).

Belongs to the KdsB family.

The protein resides in the cytoplasm. The enzyme catalyses 3-deoxy-alpha-D-manno-oct-2-ulosonate + CTP = CMP-3-deoxy-beta-D-manno-octulosonate + diphosphate. It functions in the pathway nucleotide-sugar biosynthesis; CMP-3-deoxy-D-manno-octulosonate biosynthesis; CMP-3-deoxy-D-manno-octulosonate from 3-deoxy-D-manno-octulosonate and CTP: step 1/1. The protein operates within bacterial outer membrane biogenesis; lipopolysaccharide biosynthesis. Its function is as follows. Activates KDO (a required 8-carbon sugar) for incorporation into bacterial lipopolysaccharide in Gram-negative bacteria. This Pseudomonas paraeruginosa (strain DSM 24068 / PA7) (Pseudomonas aeruginosa (strain PA7)) protein is 3-deoxy-manno-octulosonate cytidylyltransferase.